Consider the following 83-residue polypeptide: Cytochrome c oxidase subunit 7A2, mitochondrial (83 aa).

The N-terminal 23 residues, 1 to 23 (MLRNVLALRQIAQRTISTTSRRH), are a transit peptide targeting the mitochondrion. Over 24-48 (FENKVPEKQKLFQEDNGMPVHLKGG) the chain is Mitochondrial matrix. Lys-33 is modified (N6-acetyllysine). A helical transmembrane segment spans residues 49 to 77 (TSDALLYRATMLLTVGGTAYAIYMLAMAA). The Mitochondrial intermembrane portion of the chain corresponds to 78 to 83 (FPKKQN).

This sequence belongs to the cytochrome c oxidase VIIa family. As to quaternary structure, component of the cytochrome c oxidase (complex IV, CIV), a multisubunit enzyme composed of 14 subunits. The complex is composed of a catalytic core of 3 subunits MT-CO1, MT-CO2 and MT-CO3, encoded in the mitochondrial DNA, and 11 supernumerary subunits COX4I, COX5A, COX5B, COX6A, COX6B, COX6C, COX7A, COX7B, COX7C, COX8 and NDUFA4, which are encoded in the nuclear genome. The complex exists as a monomer or a dimer and forms supercomplexes (SCs) in the inner mitochondrial membrane with NADH-ubiquinone oxidoreductase (complex I, CI) and ubiquinol-cytochrome c oxidoreductase (cytochrome b-c1 complex, complex III, CIII), resulting in different assemblies (supercomplex SCI(1)III(2)IV(1) and megacomplex MCI(2)III(2)IV(2)). Interacts with PET100.

Its subcellular location is the mitochondrion inner membrane. It participates in energy metabolism; oxidative phosphorylation. Its function is as follows. Component of the cytochrome c oxidase, the last enzyme in the mitochondrial electron transport chain which drives oxidative phosphorylation. The respiratory chain contains 3 multisubunit complexes succinate dehydrogenase (complex II, CII), ubiquinol-cytochrome c oxidoreductase (cytochrome b-c1 complex, complex III, CIII) and cytochrome c oxidase (complex IV, CIV), that cooperate to transfer electrons derived from NADH and succinate to molecular oxygen, creating an electrochemical gradient over the inner membrane that drives transmembrane transport and the ATP synthase. Cytochrome c oxidase is the component of the respiratory chain that catalyzes the reduction of oxygen to water. Electrons originating from reduced cytochrome c in the intermembrane space (IMS) are transferred via the dinuclear copper A center (CU(A)) of subunit 2 and heme A of subunit 1 to the active site in subunit 1, a binuclear center (BNC) formed by heme A3 and copper B (CU(B)). The BNC reduces molecular oxygen to 2 water molecules using 4 electrons from cytochrome c in the IMS and 4 protons from the mitochondrial matrix. This is Cytochrome c oxidase subunit 7A2, mitochondrial (Cox7a2) from Rattus norvegicus (Rat).